The chain runs to 152 residues: MEKLEVGQLAPDFRLKNSDGVEISLKDLLHKKVVLYFYPKDNTPGCTLEAKDFSALFSEFEKKNAVVVGISPDNAQSHQKFISQCSLNVILLCDEDKKAANLYKAYGKRMLYGKEHLGIIRSTFIINTQGVLEKCFYNVKAKGHAQKVLESL.

The region spanning 4 to 152 is the Thioredoxin domain; sequence LEVGQLAPDF…GHAQKVLESL (149 aa). Cys-46 acts as the Cysteine sulfenic acid (-SOH) intermediate in catalysis. An intrachain disulfide couples Cys-46 to Cys-85.

Belongs to the peroxiredoxin family. BCP/PrxQ subfamily. In terms of assembly, monomer.

It carries out the reaction a hydroperoxide + [thioredoxin]-dithiol = an alcohol + [thioredoxin]-disulfide + H2O. Its function is as follows. Thiol-specific peroxidase that catalyzes the reduction of hydrogen peroxide and organic hydroperoxides to water and alcohols, respectively. Plays a role in cell protection against oxidative stress by detoxifying peroxides and as sensor of hydrogen peroxide-mediated signaling events. The protein is Putative peroxiredoxin bcp (bcp) of Helicobacter pylori (strain ATCC 700392 / 26695) (Campylobacter pylori).